A 205-amino-acid polypeptide reads, in one-letter code: Small ribosomal subunit protein uS4 (205 aa).

The interval 19 to 45 is disordered; it reads IWGRPKSPVNRREYGPGQHGQRRKGKL. The S4 RNA-binding domain occupies 94-157; it reads SRLDAVVYRA…KQLAIVLEAV (64 aa).

It belongs to the universal ribosomal protein uS4 family. Part of the 30S ribosomal subunit. Contacts protein S5. The interaction surface between S4 and S5 is involved in control of translational fidelity.

Its function is as follows. One of the primary rRNA binding proteins, it binds directly to 16S rRNA where it nucleates assembly of the body of the 30S subunit. With S5 and S12 plays an important role in translational accuracy. In Brucella melitensis biotype 2 (strain ATCC 23457), this protein is Small ribosomal subunit protein uS4.